The sequence spans 134 residues: MVNDIIADSITRIRNASIRGQEVTKLLYSKIVEAIVKILQEKGYIESYKVVEEGNKKFINVVLKYEEAGKKKRPVINEIKRISKPGRRIYKGKDEIKRFKNGYGTIIVSTSKGVLPNDEAYRLGVGGEVLCSVW.

This sequence belongs to the universal ribosomal protein uS8 family. In terms of assembly, part of the 30S ribosomal subunit. Contacts proteins S5 and S12.

Functionally, one of the primary rRNA binding proteins, it binds directly to 16S rRNA central domain where it helps coordinate assembly of the platform of the 30S subunit. The protein is Small ribosomal subunit protein uS8 of Nitratiruptor sp. (strain SB155-2).